Consider the following 210-residue polypeptide: Protein GET1 (210 aa).

Residues 1-4 (MASL) lie on the Lumenal side of the membrane. The helical transmembrane segment at 5–24 (LIIVFLSHVVTYLINTIGAT) threads the bilayer. The Cytoplasmic portion of the chain corresponds to 25-110 (TVDNLLWLLY…SFDLTVKSVR (86 aa)). Residues 43–97 (RTAVEQRRLKGEVVQLKREMKSTSSQDEFAKWAKLRRRHDKAMEEYEAKNKALGK) are a coiled coil. Residues 111–131 (FFSTTGLKFFLQFWYSKTPMF) form a helical membrane-spanning segment. The Lumenal segment spans residues 132-155 (ELPRGWVPWQVEWVLSFPRAPLGT). Residues 156–172 (VSIQVWSGVCTTVVSLA) form a helical membrane-spanning segment. The Cytoplasmic segment spans residues 173 to 210 (GDALGVVIQSLILKMTKRGVARTSEGRPSQPMALKKEL).

The protein belongs to the WRB/GET1 family. Interacts with GET3.

Its subcellular location is the endoplasmic reticulum membrane. Functionally, required for the post-translational delivery of tail-anchored (TA) proteins to the endoplasmic reticulum. Acts as a membrane receptor for soluble GET3, which recognizes and selectively binds the transmembrane domain of TA proteins in the cytosol. This Uncinocarpus reesii (strain UAMH 1704) protein is Protein GET1.